A 313-amino-acid chain; its full sequence is uncharacterized protein (313 aa).

A divalent metal cation-binding residues include His8, His10, Glu126, His180, His207, and Asp262.

It belongs to the metallo-dependent hydrolases superfamily. TatD-type hydrolase family. A divalent metal cation is required as a cofactor.

Functionally, putative deoxyribonuclease. This is an uncharacterized protein from Saccharomyces cerevisiae (strain ATCC 204508 / S288c) (Baker's yeast).